Here is a 152-residue protein sequence, read N- to C-terminus: Psoriasis susceptibility 1 candidate gene 1 protein (152 aa).

Residues 1-31 are compositionally biased toward polar residues; it reads MTCTDQKSHSQRALGTQTPALQGPQLLNTDP. The tract at residues 1–42 is disordered; that stretch reads MTCTDQKSHSQRALGTQTPALQGPQLLNTDPSSEETRPPHVN.

In terms of tissue distribution, expressed in skin. Also found in heart, placenta, liver, skeletal muscle and pancreas.

This chain is Psoriasis susceptibility 1 candidate gene 1 protein (PSORS1C1), found in Homo sapiens (Human).